Here is a 60-residue protein sequence, read N- to C-terminus: Large ribosomal subunit protein bL32 (60 aa).

Belongs to the bacterial ribosomal protein bL32 family.

The protein is Large ribosomal subunit protein bL32 of Borrelia duttonii (strain Ly).